The primary structure comprises 181 residues: Cytochrome b6-f complex iron-sulfur subunit (181 aa).

Residues 1-35 (MAQTGNFKSPARMSSLGQGAAPASSGAVTGGKPRE) are disordered. 2 helical membrane-spanning segments follow: residues 53 to 73 (VGGV…KYII) and 114 to 134 (GGAL…VNWV). The region spanning 85-178 (LTVGKASEVP…ARIEGDSIII (94 aa)) is the Rieske domain. The [2Fe-2S] cluster site is built by Cys-124, His-126, Cys-142, and His-145. A disulfide bridge links Cys-129 with Cys-144.

Belongs to the Rieske iron-sulfur protein family. [2Fe-2S] cluster is required as a cofactor.

It is found in the cell inner membrane. It catalyses the reaction 2 oxidized [plastocyanin] + a plastoquinol + 2 H(+)(in) = 2 reduced [plastocyanin] + a plastoquinone + 4 H(+)(out). In terms of biological role, component of the green S-bacteria bc-complex which consists of the Rieske protein and cytochrome b subunit and which appears to lack a cytochrome c1-equivalent. This complex has a comparatively low redox potential. This chain is Cytochrome b6-f complex iron-sulfur subunit (petC), found in Chlorobaculum thiosulfatiphilum (Chlorobium limicola f.sp. thiosulfatophilum).